A 113-amino-acid chain; its full sequence is Hydrogenase maturation factor HypA 1 (113 aa).

H2 contributes to the Ni(2+) binding site. Positions 73, 76, 89, and 92 each coordinate Zn(2+).

It belongs to the HypA/HybF family.

Involved in the maturation of [NiFe] hydrogenases. Required for nickel insertion into the metal center of the hydrogenase. This chain is Hydrogenase maturation factor HypA 1, found in Bradyrhizobium diazoefficiens (strain JCM 10833 / BCRC 13528 / IAM 13628 / NBRC 14792 / USDA 110).